Reading from the N-terminus, the 95-residue chain is MLHILMRSPFETNMVLLMNMLESVDDILMLQNSVVLALKNNVFLNKILSYSVSMYALKQDLCARGILDNISPNVNVIGYNRFVDLTVKHKQQMSW.

The protein belongs to the DsrH/TusB family. Heterohexamer, formed by a dimer of trimers. The hexameric TusBCD complex contains 2 copies each of TusB, TusC and TusD. The TusBCD complex interacts with TusE.

It localises to the cytoplasm. Its function is as follows. Part of a sulfur-relay system required for 2-thiolation of 5-methylaminomethyl-2-thiouridine (mnm(5)s(2)U) at tRNA wobble positions. In Buchnera aphidicola subsp. Baizongia pistaciae (strain Bp), this protein is Protein TusB.